Here is a 174-residue protein sequence, read N- to C-terminus: CD164 sialomucin-like 2 protein (174 aa).

Residues 1–29 (MEAPGPRALRTALCGGCCCLLLCAQLAVA) form the signal peptide. At 30 to 141 (GKGARGFGRG…AHSPGFDGAS (112 aa)) the chain is on the extracellular side. N-linked (GlcNAc...) asparagine glycans are attached at residues N71 and N103. The helical transmembrane segment at 142-162 (FIGGVVLVLSLQAVAFFVLHF) threads the bilayer. The Cytoplasmic portion of the chain corresponds to 163–174 (LKAKDSTYQTLI).

This sequence belongs to the CD164 family.

It is found in the membrane. This is CD164 sialomucin-like 2 protein (CD164L2) from Homo sapiens (Human).